The following is a 1036-amino-acid chain: DNA-directed RNA polymerase subunit beta (1036 aa).

This sequence belongs to the RNA polymerase beta chain family. In plastids the minimal PEP RNA polymerase catalytic core is composed of four subunits: alpha, beta, beta', and beta''. When a (nuclear-encoded) sigma factor is associated with the core the holoenzyme is formed, which can initiate transcription.

It is found in the plastid. The protein localises to the chloroplast. It carries out the reaction RNA(n) + a ribonucleoside 5'-triphosphate = RNA(n+1) + diphosphate. Functionally, DNA-dependent RNA polymerase catalyzes the transcription of DNA into RNA using the four ribonucleoside triphosphates as substrates. The chain is DNA-directed RNA polymerase subunit beta from Cyanidioschyzon merolae (strain NIES-3377 / 10D) (Unicellular red alga).